The primary structure comprises 372 residues: Maltose/maltodextrin import ATP-binding protein MalK (372 aa).

An ABC transporter domain is found at 4-234 (VTLKNVCKAY…PQNRFVAGFI (231 aa)). Residue 36-43 (GPSGCGKS) coordinates ATP.

It belongs to the ABC transporter superfamily. Maltooligosaccharide importer (TC 3.A.1.1.1) family. In terms of assembly, the complex is composed of two ATP-binding proteins (MalK), two transmembrane proteins (MalG and MalK) and a solute-binding protein (MalE).

The protein resides in the cell inner membrane. The catalysed reaction is D-maltose(out) + ATP + H2O = D-maltose(in) + ADP + phosphate + H(+). Its function is as follows. Part of the ABC transporter complex MalEFGK involved in maltose/maltodextrin import. Responsible for energy coupling to the transport system. This is Maltose/maltodextrin import ATP-binding protein MalK from Vibrio parahaemolyticus serotype O3:K6 (strain RIMD 2210633).